Reading from the N-terminus, the 609-residue chain is Major facilitator superfamily domain-containing protein 6-like protein A (609 aa).

Transmembrane regions (helical) follow at residues 41–61 and 78–98; these read LGLG…VHLL and FFIM…AYYP. The interval 201-241 is disordered; that stretch reads SGKAQKVMSSKSAASNSKQRSSLNNHTSPYATHPNVSHHPS. Polar residues predominate over residues 207–230; the sequence is VMSSKSAASNSKQRSSLNNHTSPY. Helical transmembrane passes span 265-285, 307-327, 340-360, 388-408, 420-440, 452-472, 475-495, 513-535, and 541-561; these read IFLI…PLEW, LWIW…FLVD, VFFH…LSTL, IVLT…TQNF, ELYM…LYFF, WMVA…SFLW, WSVL…WWAI, LALR…GFII, and AVLY…FLLV.

Belongs to the major facilitator superfamily. MFSD6 family.

Its subcellular location is the membrane. This chain is Major facilitator superfamily domain-containing protein 6-like protein A (mfsd6l-a), found in Xenopus laevis (African clawed frog).